Here is a 477-residue protein sequence, read N- to C-terminus: UDP-N-acetylmuramate--L-alanine ligase (477 aa).

122-128 (GTHGKTT) contributes to the ATP binding site.

This sequence belongs to the MurCDEF family.

It localises to the cytoplasm. It carries out the reaction UDP-N-acetyl-alpha-D-muramate + L-alanine + ATP = UDP-N-acetyl-alpha-D-muramoyl-L-alanine + ADP + phosphate + H(+). The protein operates within cell wall biogenesis; peptidoglycan biosynthesis. Cell wall formation. The chain is UDP-N-acetylmuramate--L-alanine ligase from Xylella fastidiosa (strain M23).